Reading from the N-terminus, the 404-residue chain is Probable tRNA sulfurtransferase (404 aa).

Positions 60 to 165 (QPVAESLKQI…EEAAYISYET (106 aa)) constitute a THUMP domain. ATP is bound by residues 183-184 (ML), 208-209 (HF), R265, G287, and Q296.

Belongs to the ThiI family.

Its subcellular location is the cytoplasm. The catalysed reaction is [ThiI sulfur-carrier protein]-S-sulfanyl-L-cysteine + a uridine in tRNA + 2 reduced [2Fe-2S]-[ferredoxin] + ATP + H(+) = [ThiI sulfur-carrier protein]-L-cysteine + a 4-thiouridine in tRNA + 2 oxidized [2Fe-2S]-[ferredoxin] + AMP + diphosphate. It carries out the reaction [ThiS sulfur-carrier protein]-C-terminal Gly-Gly-AMP + S-sulfanyl-L-cysteinyl-[cysteine desulfurase] + AH2 = [ThiS sulfur-carrier protein]-C-terminal-Gly-aminoethanethioate + L-cysteinyl-[cysteine desulfurase] + A + AMP + 2 H(+). The protein operates within cofactor biosynthesis; thiamine diphosphate biosynthesis. Its function is as follows. Catalyzes the ATP-dependent transfer of a sulfur to tRNA to produce 4-thiouridine in position 8 of tRNAs, which functions as a near-UV photosensor. Also catalyzes the transfer of sulfur to the sulfur carrier protein ThiS, forming ThiS-thiocarboxylate. This is a step in the synthesis of thiazole, in the thiamine biosynthesis pathway. The sulfur is donated as persulfide by IscS. The chain is Probable tRNA sulfurtransferase from Streptococcus sanguinis (strain SK36).